The following is a 391-amino-acid chain: Adhesion defective protein 1 (391 aa).

The span at 180–190 (SQSRPPQNQIQ) shows a compositional bias: polar residues. Disordered regions lie at residues 180-217 (SQSR…PDSP) and 366-391 (VEGE…RTKV). The segment covering 201 to 211 (SESVNINSSSS) has biased composition (low complexity). Residues 370 to 383 (NPNNNPNFYSSDML) show a composition bias toward polar residues.

This sequence belongs to the adn1/SEU family.

It is found in the nucleus. Its function is as follows. Probable transcriptional regulator involved in cell adhesion. The polypeptide is Adhesion defective protein 1 (adn1) (Schizosaccharomyces pombe (strain 972 / ATCC 24843) (Fission yeast)).